We begin with the raw amino-acid sequence, 350 residues long: N-acetyl-gamma-glutamyl-phosphate reductase (350 aa).

Cys-153 is a catalytic residue.

This sequence belongs to the NAGSA dehydrogenase family. Type 1 subfamily.

The protein resides in the cytoplasm. The enzyme catalyses N-acetyl-L-glutamate 5-semialdehyde + phosphate + NADP(+) = N-acetyl-L-glutamyl 5-phosphate + NADPH + H(+). It functions in the pathway amino-acid biosynthesis; L-arginine biosynthesis; N(2)-acetyl-L-ornithine from L-glutamate: step 3/4. In terms of biological role, catalyzes the NADPH-dependent reduction of N-acetyl-5-glutamyl phosphate to yield N-acetyl-L-glutamate 5-semialdehyde. The sequence is that of N-acetyl-gamma-glutamyl-phosphate reductase from Gloeobacter violaceus (strain ATCC 29082 / PCC 7421).